Consider the following 182-residue polypeptide: Superoxide dismutase [Cu-Zn] (182 aa).

A signal peptide spans 1–19 (MFRTLTVVPLLALGLSLSA). Cys20 carries the N-palmitoyl cysteine lipid modification. Residue Cys20 is the site of S-diacylglycerol cysteine attachment. Residues His69, His71, and His95 each coordinate Cu cation. A disulfide bridge links Cys76 with Cys175. The disordered stretch occupies residues 91–118 (AAGGHFDPGASHNHDGPHARNDQGHGGD). 4 residues coordinate Zn(2+): His95, His104, His115, and Asp118. A compositionally biased stretch (basic and acidic residues) spans 102 to 115 (HNHDGPHARNDQGH).

It belongs to the Cu-Zn superoxide dismutase family. Cu cation serves as cofactor. It depends on Zn(2+) as a cofactor.

The protein localises to the cell membrane. The enzyme catalyses 2 superoxide + 2 H(+) = H2O2 + O2. Destroys radicals which are normally produced within the cells and which are toxic to biological systems. This is Superoxide dismutase [Cu-Zn] (sodC) from Deinococcus radiodurans (strain ATCC 13939 / DSM 20539 / JCM 16871 / CCUG 27074 / LMG 4051 / NBRC 15346 / NCIMB 9279 / VKM B-1422 / R1).